The following is a 539-amino-acid chain: MAVPFLSSSLQLTPTSPILFTKVTPTPIIHNHRSTCTIPTKPRLRLLRRSAVAGTAVSDQTEGGGDVLLNPEEEKRVEVADYDWTEEWYPLYLTKNVPEDAPLGLTVYDRQIVLYKDGEGTLRCYEDRCPHRLAKLSEGQLIDGRLECLYHGWQFEGEGKCVKIPQLPASAKIPKAACVKTYEVKDSQGVVWVWMSTKTPPNPEKLPWFENFARPGFFDISTTHELPYDHSILLENLMDPAHVPISHDRTDFTAKREDAQPLVFEVTERSNRGFAGTWGREKEGGKGSNLLRFDAPCVLQNNREFEGKDGVKNYFSGLFLCRPTGQGKSMLIVRFGVTKRSPLVSVLPQWFWHQNACKVFEQDMGFLSSQNEVLMKEKVPTKDLYLNLKSSDTWVAEYRKWMDKVGHGMPYHFGHRTISLPKVPPVVEHAPAGLIAALSASYPAKGGIGTMHAPNLANRYFRHIIHCRSCSNVIKSFELWKNILSATAVALTALAILVVSRQWKAVLLGSAALCSAAAYTCLRAINLNTNNFIRTHRRL.

The N-terminal 50 residues, 1 to 50 (MAVPFLSSSLQLTPTSPILFTKVTPTPIIHNHRSTCTIPTKPRLRLLRRS), are a transit peptide targeting the chloroplast. Residue A51 is modified to N-acetylalanine. Residues 51–482 (AVAGTAVSDQ…VIKSFELWKN (432 aa)) are Stromal-facing. The Rieske domain maps to 88 to 193 (WYPLYLTKNV…VKDSQGVVWV (106 aa)). Positions 129, 131, 148, and 151 each coordinate [2Fe-2S] cluster. Fe cation contacts are provided by H242 and H247. The Redox-active motif signature appears at 467 to 470 (CRSC). Residues 483–500 (ILSATAVALTALAILVVS) form a helical membrane-spanning segment. Residues 501–504 (RQWK) are Chloroplast intermembrane-facing. Residues 505–527 (AVLLGSAALCSAAAYTCLRAINL) form a helical membrane-spanning segment. The Stromal portion of the chain corresponds to 528–539 (NTNNFIRTHRRL).

As to quaternary structure, part of the Tic complex. Interacts with TIC62 and TIC110. The cofactor is [2Fe-2S] cluster. In terms of tissue distribution, highly expressed in green tissues and very low levels in non-photosynthetic tissues such as roots and etiolated seedlings.

The protein resides in the plastid. Its subcellular location is the chloroplast inner membrane. Involved in protein precursor import into chloroplasts. Part of the redox regulon consisting of TIC32, TIC 55 and TIC62. The polypeptide is Protein TIC 55, chloroplastic (TIC55) (Arabidopsis thaliana (Mouse-ear cress)).